A 1830-amino-acid polypeptide reads, in one-letter code: Dedicator of cytokinesis protein 2 (1830 aa).

One can recognise an SH3 domain in the interval 8–69; the sequence is DKERHGVAIY…PKSFIHIKEV (62 aa). Lys-304 carries the N6-acetyllysine modification. Positions 423-607 constitute a C2 DOCK-type domain; sequence RNDIYITLLQ…DVFSISTLVC (185 aa). A phosphoserine mark is found at Ser-588 and Ser-593. Lys-738 bears the N6-acetyllysine mark. The interaction with CRKL stretch occupies residues 939–1476; it reads CMTAILNQMG…TSFVTAYKLP (538 aa). One can recognise a DOCKER domain in the interval 1211 to 1622; sequence YKDNNREEMY…VEKEYGVREM (412 aa). Residues 1651-1665 show a composition bias toward polar residues; sequence MNSDCSTPSKPTSES. The interval 1651 to 1704 is disordered; sequence MNSDCSTPSKPTSESFDLELASPKTPRVEQEEPISPGSTLPEVKLRRSKKRTKR. Phosphoserine occurs at positions 1685, 1706, 1731, and 1784.

This sequence belongs to the DOCK family. Homodimer. Interacts with RAC1 and RAC2. Interacts with CRKL and VAV. Interacts with CD3Z. As to expression, specifically expressed in hematopoietic cells. Highly expressed in peripheral blood leukocytes, and expressed at intermediate level in thymus and spleen. Expressed at very low level in the small intestine and colon.

Its subcellular location is the endomembrane system. It is found in the cytoplasm. The protein resides in the cytoskeleton. In terms of biological role, involved in cytoskeletal rearrangements required for lymphocyte migration in response of chemokines. Activates RAC1 and RAC2, but not CDC42, by functioning as a guanine nucleotide exchange factor (GEF), which exchanges bound GDP for free GTP. May also participate in IL2 transcriptional activation via the activation of RAC2. The polypeptide is Dedicator of cytokinesis protein 2 (DOCK2) (Homo sapiens (Human)).